We begin with the raw amino-acid sequence, 284 residues long: Aspartate dehydrogenase domain-containing protein (284 aa).

It belongs to the L-aspartate dehydrogenase family.

This is Aspartate dehydrogenase domain-containing protein (aspdh) from Xenopus tropicalis (Western clawed frog).